The primary structure comprises 420 residues: Methylaspartate ammonia-lyase 1 (420 aa).

Residue Gln-173 coordinates (2S,3S)-3-methyl-L-aspartate. Mg(2+) contacts are provided by Asp-237, Glu-272, and Asp-306. Gln-328 lines the (2S,3S)-3-methyl-L-aspartate pocket. Lys-330 functions as the Proton acceptor in the catalytic mechanism. 359 to 360 (SC) lines the (2S,3S)-3-methyl-L-aspartate pocket.

Homodimer. Requires Mg(2+) as cofactor.

The catalysed reaction is (2S,3S)-3-methyl-L-aspartate = mesaconate + NH4(+). It functions in the pathway amino-acid degradation; L-glutamate degradation via mesaconate pathway; acetate and pyruvate from L-glutamate: step 2/4. Involved in the methylaspartate cycle. Catalyzes the formation of the alpha,beta-unsaturated bond by the reversible anti elimination of ammonia from L-threo-beta-methylaspartate (L-threo-(2S,3S)-3-methylaspartate) to give mesaconate. It can also catalyze the amination of fumarate and ethylfumarate, and the deamination of hydroxylamine, hydrazine, methylamine and ethylamine. This chain is Methylaspartate ammonia-lyase 1, found in Carboxydothermus hydrogenoformans (strain ATCC BAA-161 / DSM 6008 / Z-2901).